An 870-amino-acid chain; its full sequence is Valine--tRNA ligase (870 aa).

The 'HIGH' region signature appears at 42 to 52 (PNVTGVLHIGH). The 'KMSKS' region signature appears at 527-531 (KMSKS). K530 is an ATP binding site. Residues 800–870 (LENVDLSGIL…ISVELQNLRG (71 aa)) adopt a coiled-coil conformation.

This sequence belongs to the class-I aminoacyl-tRNA synthetase family. ValS type 1 subfamily. As to quaternary structure, monomer.

Its subcellular location is the cytoplasm. The enzyme catalyses tRNA(Val) + L-valine + ATP = L-valyl-tRNA(Val) + AMP + diphosphate. Catalyzes the attachment of valine to tRNA(Val). As ValRS can inadvertently accommodate and process structurally similar amino acids such as threonine, to avoid such errors, it has a 'posttransfer' editing activity that hydrolyzes mischarged Thr-tRNA(Val) in a tRNA-dependent manner. The protein is Valine--tRNA ligase of Campylobacter jejuni (strain RM1221).